Reading from the N-terminus, the 371-residue chain is Putative glutamate--cysteine ligase 2 (371 aa).

This sequence belongs to the glutamate--cysteine ligase type 2 family. YbdK subfamily.

The enzyme catalyses L-cysteine + L-glutamate + ATP = gamma-L-glutamyl-L-cysteine + ADP + phosphate + H(+). Functionally, ATP-dependent carboxylate-amine ligase which exhibits weak glutamate--cysteine ligase activity. The chain is Putative glutamate--cysteine ligase 2 from Burkholderia multivorans (strain ATCC 17616 / 249).